A 224-amino-acid chain; its full sequence is Inner membrane-spanning protein YciB (224 aa).

The next 6 membrane-spanning stretches (helical) occupy residues 20–40, 61–81, 86–106, 123–143, 156–176, and 187–207; these read GVNP…FFFA, IFVA…ASWL, LPIM…LTLY, LFGG…GYVF, KLTF…EVVW, and FKVW…MPLI.

It belongs to the YciB family.

The protein localises to the cell inner membrane. In terms of biological role, plays a role in cell envelope biogenesis, maintenance of cell envelope integrity and membrane homeostasis. This chain is Inner membrane-spanning protein YciB, found in Mesorhizobium japonicum (strain LMG 29417 / CECT 9101 / MAFF 303099) (Mesorhizobium loti (strain MAFF 303099)).